We begin with the raw amino-acid sequence, 176 residues long: Large ribosomal subunit protein eL6A (176 aa).

The residue at position 2 (serine 2) is an N-acetylserine. A Phosphoserine modification is found at serine 12. Residue lysine 128 forms a Glycyl lysine isopeptide (Lys-Gly) (interchain with G-Cter in ubiquitin) linkage.

It belongs to the eukaryotic ribosomal protein eL6 family. Component of the large ribosomal subunit (LSU). Mature yeast ribosomes consist of a small (40S) and a large (60S) subunit. The 40S small subunit contains 1 molecule of ribosomal RNA (18S rRNA) and 33 different proteins (encoded by 57 genes). The large 60S subunit contains 3 rRNA molecules (25S, 5.8S and 5S rRNA) and 46 different proteins (encoded by 81 genes). N-terminally acetylated by acetyltransferase NatA.

The protein resides in the cytoplasm. In terms of biological role, component of the ribosome, a large ribonucleoprotein complex responsible for the synthesis of proteins in the cell. The small ribosomal subunit (SSU) binds messenger RNAs (mRNAs) and translates the encoded message by selecting cognate aminoacyl-transfer RNA (tRNA) molecules. The large subunit (LSU) contains the ribosomal catalytic site termed the peptidyl transferase center (PTC), which catalyzes the formation of peptide bonds, thereby polymerizing the amino acids delivered by tRNAs into a polypeptide chain. The nascent polypeptides leave the ribosome through a tunnel in the LSU and interact with protein factors that function in enzymatic processing, targeting, and the membrane insertion of nascent chains at the exit of the ribosomal tunnel. The chain is Large ribosomal subunit protein eL6A from Saccharomyces cerevisiae (strain ATCC 204508 / S288c) (Baker's yeast).